Consider the following 205-residue polypeptide: Probable GTP-binding protein EngB (205 aa).

Residues 25-199 (NGIEIAFIGY…KLSLNSSYKK (175 aa)) enclose the EngB-type G domain. GTP is bound by residues 33 to 40 (GYSNTGKS), 60 to 64 (GRTQL), 78 to 81 (DLPG), 145 to 148 (TKCD), and 178 to 180 (FSS). Residues S40 and T62 each coordinate Mg(2+).

The protein belongs to the TRAFAC class TrmE-Era-EngA-EngB-Septin-like GTPase superfamily. EngB GTPase family. It depends on Mg(2+) as a cofactor.

Its function is as follows. Necessary for normal cell division and for the maintenance of normal septation. This is Probable GTP-binding protein EngB from Buchnera aphidicola subsp. Acyrthosiphon pisum (strain 5A).